The following is a 232-amino-acid chain: Ribonuclease 3 (232 aa).

The RNase III domain maps to 6–133 (FNDIENRLGV…VIAAVYLDKG (128 aa)). Mg(2+) is bound at residue glutamate 46. Aspartate 50 is an active-site residue. Aspartate 119 and glutamate 122 together coordinate Mg(2+). Residue glutamate 122 is part of the active site. The DRBM domain maps to 160-229 (DFKTKLQELL…AKEALKRLEK (70 aa)).

The protein belongs to the ribonuclease III family. In terms of assembly, homodimer. Mg(2+) is required as a cofactor.

The protein localises to the cytoplasm. It carries out the reaction Endonucleolytic cleavage to 5'-phosphomonoester.. In terms of biological role, digests double-stranded RNA. Involved in the processing of primary rRNA transcript to yield the immediate precursors to the large and small rRNAs (23S and 16S). Processes some mRNAs, and tRNAs when they are encoded in the rRNA operon. Processes pre-crRNA and tracrRNA of type II CRISPR loci if present in the organism. The polypeptide is Ribonuclease 3 (Clostridium botulinum (strain Alaska E43 / Type E3)).